The following is an 822-amino-acid chain: MSLASLARALSRRSAPSSSRARQGFSLGGLGGTTRSPPPPSSPLPSLHGGEGGGLGLGFVRGYLTAALGRPAAVKAGTDWRSILANPQFRRLFSDGSKKNYENYYPKGKKEAPKGDGSNKSDSKQDSSTDDQWNFQETASKQLQNFLAPLLFLGLMLSSLSSSSSDQKEISFQEFKNKLLEPGLVDRIVVSNKSVAKVYVRSSPQSNSQGQNTDAIITTNDVPSKHTPSRYKYYFNIGSVDSFEEKLEEAQEALGVDPHDFVPVTYVAEVNWFQEVMRFAPTVFLVGLIYLMSKRMQSGFNIGGGPGKGGRGIFNIGKAQVTKMDKNSKNKVFFKDVAGCDEAKQEIMEFVHFLKNPKKYEELGAKIPKGALLVGPPGTGKTLLAKATAGESGVPFLSISGSDFMEMFVGVGPSRVRNLFQEARQCAPSIIFIDEIDAIGRARGRGGFSGSNDERESTLNQLLVEMDGFGTTSGVVVLAGTNRPDILDKALLRPGRFDRQITIDKPDIKGRDQIFRIYLKKLKLDNEPSFYSQRLAALTPGFAGADIANVCNEAALIAARSEETQITMQHFESAIDRIIGGLEKKNKVISKLERRTVAYHESGHAVAGWFLEHAEPLLKVTIVPRGTAALGFAQYVPNENLLMTKEQLFDMTCMTLGGRAAEEVLIGRISTGAQNDLEKVTKMTYAQVAVYGFSEKVGLLSFPQRDDGFEMTKPYSNQTASIIDDEVREWVGKAYKKTVELITEHKEQVAKIAEMLLEKEVLHQDDLVRVLGERPFKASEPTNYDLFKQGFQDEEDSKNQEAAKTPQPDDDGTPSLGEVVPT.

The span at 1–25 (MSLASLARALSRRSAPSSSRARQGF) shows a compositional bias: low complexity. Disordered stretches follow at residues 1 to 50 (MSLA…LHGG), 103 to 131 (NYYPKGKKEAPKGDGSNKSDSKQDSSTDD), and 202 to 221 (SSPQSNSQGQNTDAIITTND). A mitochondrion-targeting transit peptide spans 1–93 (MSLASLARAL…LANPQFRRLF (93 aa)). The segment covering 108-127 (GKKEAPKGDGSNKSDSKQDS) has biased composition (basic and acidic residues). Residue 375–382 (GPPGTGKT) participates in ATP binding. A Zn(2+)-binding site is contributed by histidine 600. Residue glutamate 601 is part of the active site. Zn(2+)-binding residues include histidine 604 and aspartate 676. Residues 781–822 (PTNYDLFKQGFQDEEDSKNQEAAKTPQPDDDGTPSLGEVVPT) are disordered.

This sequence in the N-terminal section; belongs to the AAA ATPase family. It in the C-terminal section; belongs to the peptidase M41 family. Zn(2+) is required as a cofactor.

The protein resides in the mitochondrion. Probable ATP-dependent zinc metallopeptidase. The chain is ATP-dependent zinc metalloprotease FTSH 8, mitochondrial (FTSH8) from Oryza sativa subsp. japonica (Rice).